The sequence spans 119 residues: Beta-2-microglobulin (119 aa).

Positions 1-20 are cleaved as a signal peptide; that stretch reads MARFVVVPLLVLLSLFGLEA. The region spanning 25–114 is the Ig-like C1-type domain; that stretch reads PKIQVYSRYP…VTFSTPKTVK (90 aa). A disulfide bridge links C45 with C100.

The protein belongs to the beta-2-microglobulin family. In terms of assembly, heterodimer of an alpha chain and a beta chain. Beta-2-microglobulin is the beta-chain of major histocompatibility complex class I molecules.

The protein localises to the secreted. Its function is as follows. Component of the class I major histocompatibility complex (MHC). Involved in the presentation of peptide antigens to the immune system. This is Beta-2-microglobulin (B2M) from Saguinus bicolor bicolor (Pied bare-faced tamarin).